The following is a 567-amino-acid chain: ETHYLENE INSENSITIVE 3-like 3 protein (567 aa).

Residues 24-44 adopt a coiled-coil conformation; it reads NVAEIDVSDEEIDADDLERRM. Disordered regions lie at residues 55–81 and 286–393; these read KERQ…AQRK and IQQP…RNIL. Basic and acidic residues predominate over residues 69–79; it reads ETPKKISDQAQ. A DNA-binding region spans residues 162–288; it reads SQFVLQDLQD…LNQEESLIQQ (127 aa). Over residues 286 to 299 the composition is skewed to polar residues; the sequence is IQQPSSDNGNSNVT. Residues 300–312 are compositionally biased toward basic and acidic residues; sequence ETHRRGNNADRRK. Positions 363-372 are enriched in basic residues; the sequence is KHRRRKRPRI.

The protein belongs to the EIN3 family. In terms of assembly, interacts with MYB72.

It is found in the nucleus. Functionally, probable transcription factor that may be involved in the ethylene response pathway. In Arabidopsis thaliana (Mouse-ear cress), this protein is ETHYLENE INSENSITIVE 3-like 3 protein (EIL3).